We begin with the raw amino-acid sequence, 5125 residues long: Usherin (5125 aa).

The first 33 residues, 1-33 (MYYLALSSGFLGQAIKTSILAYLASVLLAASQG), serve as a signal peptide directing secretion. N-linked (GlcNAc...) asparagine glycans are attached at residues asparagine 120, asparagine 229, asparagine 257, asparagine 273, asparagine 414, asparagine 447, and asparagine 468. Residues 273 to 513 (NVSLTNREIL…AVDEITIIGR (241 aa)) form the Laminin N-terminal domain. Cystine bridges form between cysteine 514–cysteine 523, cysteine 516–cysteine 532, cysteine 534–cysteine 545, cysteine 548–cysteine 568, cysteine 571–cysteine 580, cysteine 573–cysteine 601, cysteine 604–cysteine 613, cysteine 616–cysteine 634, cysteine 637–cysteine 651, cysteine 639–cysteine 658, cysteine 660–cysteine 669, cysteine 672–cysteine 687, cysteine 690–cysteine 704, cysteine 692–cysteine 711, cysteine 713–cysteine 722, cysteine 725–cysteine 740, cysteine 743–cysteine 755, cysteine 745–cysteine 762, cysteine 764–cysteine 773, cysteine 776–cysteine 788, cysteine 791–cysteine 804, cysteine 793–cysteine 811, cysteine 813–cysteine 822, cysteine 825–cysteine 840, cysteine 843–cysteine 857, cysteine 845–cysteine 864, cysteine 866–cysteine 875, cysteine 878–cysteine 893, cysteine 896–cysteine 909, cysteine 898–cysteine 916, cysteine 918–cysteine 927, cysteine 930–cysteine 944, cysteine 947–cysteine 959, cysteine 949–cysteine 966, cysteine 981–cysteine 995, cysteine 998–cysteine 1010, cysteine 1000–cysteine 1017, cysteine 1019–cysteine 1028, and cysteine 1031–cysteine 1046. Laminin EGF-like domains follow at residues 514 to 570 (CQCH…NCKP), 571 to 636 (CQCH…VCKH), 637 to 689 (CDCN…CCRP), 690 to 742 (CDCN…GCEP), 743 to 790 (CHCN…ACEV), 791 to 842 (CDCN…LCLP), 843 to 895 (CNCE…GCQA), 896 to 946 (CDCD…GCLP), 947 to 997 (CLCH…RCRP), and 998 to 1048 (CHCH…ACSK). N-linked (GlcNAc...) asparagine glycosylation is present at asparagine 646. N-linked (GlcNAc...) asparagine glycosylation is found at asparagine 835 and asparagine 852. N-linked (GlcNAc...) asparagine glycosylation is present at asparagine 884. Residue asparagine 940 is glycosylated (N-linked (GlcNAc...) asparagine). Asparagine 1007 carries an N-linked (GlcNAc...) asparagine glycan. Fibronectin type-III domains are found at residues 1054-1142 (PPPR…TKPE), 1146-1240 (GHLN…APPQ), 1241-1356 (RQEP…SAPV), and 1357-1461 (FMAA…AAPA). N-linked (GlcNAc...) asparagine glycans are attached at residues asparagine 1067, asparagine 1149, asparagine 1170, asparagine 1221, asparagine 1304, and asparagine 1381. 2 consecutive Laminin G-like domains span residues 1510–1697 (TKGT…WEGC) and 1702–1879 (EEGV…QDGC). Cystine bridges form between cysteine 1660/cysteine 1697 and cysteine 1850/cysteine 1879. 29 Fibronectin type-III domains span residues 1857–1943 (TRGA…SAPH), 1945–2042 (VPTP…TPQE), 2043–2132 (APQE…LPPE), 2133–2230 (RVDP…TVPE), 2231–2318 (GVPA…APPE), 2319–2421 (GTVN…MPPG), 2425–2519 (GLLS…TTED), 2520–2613 (KPGP…TPEG), 2614–2709 (IPGP…TRPS), 2713–2806 (GVQP…THPA), 2807–2910 (LPQE…TLAG), 2914–3005 (RGAT…TWEE), 3009–3099 (GMRP…TPSG), 3380–3485 (ATEE…TRED), 3486–3577 (VPQG…TRGV), 3580–3670 (SVPP…AAPQ), 3672–3762 (VWVT…TPED), 3765–3852 (PPCN…TLEA), 3853–3950 (APVG…TLEA), 3951–4054 (PPQD…SAPS), 4055–4143 (GLMN…APPD), 4144–4251 (SQMA…APPD), 4252–4344 (GLSP…ASPA), 4345–4432 (GVSP…APPE), 4433–4517 (DMDP…TSPS), 4518–4620 (APSG…IPPL), 4625–4720 (PHLE…TGPA), 4721–4813 (PPEG…THPA), and 4814–4916 (PPSG…TKKE). The interval 1930-1950 (SDWSRGRTLGSAPHSVPTPSR) is disordered.

As to quaternary structure, interacts with collagen IV and fibronectin via its laminin EGF-like domains. Interaction with collagen may be required for stable integration into the basement membrane. Interacts with NINL. Interacts with USH1C. Interacts (via the cytoplasmic region) with PDZD7. Component of USH2 complex, composed of ADGRV1, PDZD7, USH2A and WHRN. Interacts with ADGRV1/MASS1 (via N-terminal PDZ domain). Interacts (via the cytoplasmic region) with WHRN. Interacts (via the cytoplasmic region) with VEZT and MYO7A (via MyTH4-FERM domains); the interaction associates VEZT with the USH2 complex at the stereocilia base. In terms of tissue distribution, present in the synaptic terminals of inner ear hair cells (at protein level). Predominantly expressed in the retina and cochlea. Weakly expressed in brain and kidney. Detectable from E17 in the neural epithelium, but not in the retinal pigment epithelium (RPE) of the developing retina. After birth, it is expressed at P7 and remains expressed during adulthood.

It is found in the secreted. Its subcellular location is the cell projection. The protein localises to the stereocilium membrane. It localises to the photoreceptor inner segment. Its function is as follows. Involved in hearing and vision as member of the USH2 complex. In the inner ear, required for the hair bundle ankle formation, which connects growing stereocilia in developing cochlear hair cells. In retina photoreceptors, the USH2 complex is required for the maintenance of periciliary membrane complex that seems to play a role in regulating intracellular protein transport. This is Usherin (Ush2a) from Rattus norvegicus (Rat).